The sequence spans 341 residues: GTPase Obg (341 aa).

Residues 1 to 159 form the Obg domain; it reads MKFVDEALIK…RNLRLELRVL (159 aa). The tract at residues 128-150 is disordered; that stretch reads TRYKSSVNRSPRQTTPGSPGESR. Over residues 129 to 144 the composition is skewed to polar residues; the sequence is RYKSSVNRSPRQTTPG. Positions 160–334 constitute an OBG-type G domain; sequence ADVGLLGLPN…LCYALMQLID (175 aa). GTP contacts are provided by residues 166–173, 191–195, 213–216, 283–286, and 315–317; these read GLPNAGKS, FTTLH, DIPG, NKID, and SAI. Positions 173 and 193 each coordinate Mg(2+).

This sequence belongs to the TRAFAC class OBG-HflX-like GTPase superfamily. OBG GTPase family. Monomer. It depends on Mg(2+) as a cofactor.

The protein localises to the cytoplasm. Functionally, an essential GTPase which binds GTP, GDP and possibly (p)ppGpp with moderate affinity, with high nucleotide exchange rates and a fairly low GTP hydrolysis rate. Plays a role in control of the cell cycle, stress response, ribosome biogenesis and in those bacteria that undergo differentiation, in morphogenesis control. In Legionella pneumophila (strain Paris), this protein is GTPase Obg.